The sequence spans 83 residues: Cell division protein ZapB (83 aa).

Residues 7–80 are a coiled coil; the sequence is EMLEKLEAKV…RVRTLLGKMD (74 aa).

This sequence belongs to the ZapB family. Homodimer. The ends of the coiled-coil dimer bind to each other, forming polymers. Interacts with FtsZ.

It localises to the cytoplasm. Functionally, non-essential, abundant cell division factor that is required for proper Z-ring formation. It is recruited early to the divisome by direct interaction with FtsZ, stimulating Z-ring assembly and thereby promoting cell division earlier in the cell cycle. Its recruitment to the Z-ring requires functional FtsA or ZipA. The sequence is that of Cell division protein ZapB from Photobacterium profundum (strain SS9).